Here is a 106-residue protein sequence, read N- to C-terminus: Small ribosomal subunit protein bS18 (106 aa).

The segment at 1–41 (MAEEHSNQRSQTFNGERTNRPSRKPRGDGERRGRRQGGRRR) is disordered.

The protein belongs to the bacterial ribosomal protein bS18 family. In terms of assembly, part of the 30S ribosomal subunit. Forms a tight heterodimer with protein bS6.

In terms of biological role, binds as a heterodimer with protein bS6 to the central domain of the 16S rRNA, where it helps stabilize the platform of the 30S subunit. In Oenococcus oeni (strain ATCC BAA-331 / PSU-1), this protein is Small ribosomal subunit protein bS18.